Consider the following 250-residue polypeptide: ATP synthase subunit a (250 aa).

Transmembrane regions (helical) follow at residues 29 to 49 (ASLFMVATVACAAGFLYFATS), 84 to 104 (FFPMVFSLFMFVLTANLLGMM), 114 to 134 (IVVTFALAIFVIGTVLVYGFY), 143 to 163 (LFVPSGVPGALLLLVVPIEVI), 189 to 209 (VFAGFVASLGSLGALGVGGAL), and 216 to 236 (VALTGLEFLVAFLQAYVFAVL).

Belongs to the ATPase A chain family. As to quaternary structure, F-type ATPases have 2 components, CF(1) - the catalytic core - and CF(0) - the membrane proton channel. CF(1) has five subunits: alpha(3), beta(3), gamma(1), delta(1), epsilon(1). CF(0) has three main subunits: a(1), b(2) and c(9-12). The alpha and beta chains form an alternating ring which encloses part of the gamma chain. CF(1) is attached to CF(0) by a central stalk formed by the gamma and epsilon chains, while a peripheral stalk is formed by the delta and b chains.

It is found in the cell inner membrane. Key component of the proton channel; it plays a direct role in the translocation of protons across the membrane. The polypeptide is ATP synthase subunit a (Allorhizobium ampelinum (strain ATCC BAA-846 / DSM 112012 / S4) (Agrobacterium vitis (strain S4))).